Consider the following 232-residue polypeptide: MTSLVITDIDGTITGDDRAVHLKCIRYLRELQKRGIPVGIATGNTLCYSRSAATLLGFEGPLIAENGGIVAVDDEEISTVPEEDIELIQEAYRELRRRLGVRRTEPPGLRRTEVAIYRDVPIEEVERVLDGLGYSGRIEVVDTGFAYHLKSKRVDKGKGLLVICERLGIDPDDVVAIGDGDNDAPLLKAAGLGVAPANATENVKRIADVVLDAENGEGVATFLRKLLEEVDA.

Aspartate 8 acts as the Nucleophile in catalysis. Positions 8 and 10 each coordinate Mg(2+). Residue lysine 156 participates in substrate binding. Positions 179 and 183 each coordinate Mg(2+).

This sequence belongs to the archaeal SPP-like hydrolase family. The cofactor is Mg(2+).

The enzyme catalyses 2-phosphoglycolate + H2O = glycolate + phosphate. Functionally, catalyzes the dephosphorylation of 2-phosphoglycolate. The chain is Phosphoglycolate phosphatase from Methanopyrus kandleri (strain AV19 / DSM 6324 / JCM 9639 / NBRC 100938).